The primary structure comprises 143 residues: Transcriptional regulator MraZ (143 aa).

SpoVT-AbrB domains lie at 5 to 47 (THHP…PRAE) and 76 to 119 (TDEQ…NAER).

This sequence belongs to the MraZ family. Forms oligomers.

It localises to the cytoplasm. It is found in the nucleoid. In Saccharopolyspora erythraea (strain ATCC 11635 / DSM 40517 / JCM 4748 / NBRC 13426 / NCIMB 8594 / NRRL 2338), this protein is Transcriptional regulator MraZ.